The primary structure comprises 522 residues: Circadian clock oscillator protein KaiC (522 aa).

KaiC domains follow at residues 1 to 248 and 262 to 522; these read MKKS…INIF and ARVS…DDLL. Residues Gly50, Thr51, Gly52, Lys53, Thr54, Ser90, Lys225, Leu226, Arg227, Thr229, His231, Thr241, Asp242, Thr291, Gly292, Thr293, Gly294, Lys295, Thr296, and Leu297 each coordinate ATP. Mg(2+) is bound at residue Thr54. Thr296 lines the Mg(2+) pocket. Glu319 lines the Mg(2+) pocket. Trp332 lines the ATP pocket. Ser432 carries the phosphoserine; by autocatalysis modification. Thr433 carries the phosphothreonine; by autocatalysis modification. Residues Arg452, Lys458, Met459, Arg460, Ser462, His464, and Lys466 each contribute to the ATP site.

Belongs to the KaiC family. In terms of assembly, homohexamer; hexamerization is dependent on ATP-binding. The KaiABC complex composition changes during the circadian cycle to control KaiC phosphorylation. Complexes KaiC(6), KaiA(2-4):KaiC(6), KaiB(6):KaiC(6) and KaiC(6):KaiB(6):KaiA(12) are among the most important forms, many form cooperatively. KaiC interacts with SasA, activating its autokinase function and leading to RpaA activation. Requires Mg(2+) as cofactor. Phosphorylated on serine and threonine residues by autocatalysis. Has a 4 step phosphorylation cycle; the autokinase acts first on Thr-433, then Ser-432. When Ser-432 is modified KaiC switches to an autophosphatase mode, acting first on phospho-Thr-433 then phospho-Ser-432.

The enzyme catalyses L-seryl-[protein] + ATP = O-phospho-L-seryl-[protein] + ADP + H(+). It carries out the reaction L-threonyl-[protein] + ATP = O-phospho-L-threonyl-[protein] + ADP + H(+). The catalysed reaction is ATP + H2O = ADP + phosphate + H(+). The interaction with KaiA enhances its phosphorylation status, while the interaction with KaiB decreases it. Functionally, central component of the KaiABC oscillator complex, which constitutes the main circadian regulator in cyanobacteria. Complex composition changes during the circadian cycle to control KaiC phosphorylation. KaiA stimulates KaiC autophosphorylation, while KaiB sequesters KaiA, leading to KaiC autodephosphorylation. Clock output pathways impact the RpaA transcriptional regulator. KaiC enhances the autophosphorylation activity of SasA, which then transfers its phosphate group to RpaA to activate it. KaiB and KaiC together enhance the phospho-RpaA dephosphatase activity of CikA. Its function is as follows. Has a weak, temperature-independent ATPase activity; ATPase activity defines the circadian period. The phosphorylation state of KaiC modulates its ATPase activity and effects KaiB binding. This Acaryochloris marina (strain MBIC 11017) protein is Circadian clock oscillator protein KaiC.